The chain runs to 169 residues: MGLFDKLKSLVSDDKKDTGTIEIVAPLSGEIVNIEDVPDVVFAEKIVGDGIAIKPTGNKMVAPVDGTIGKIFETNHAFSIESDSGIELFVHFGIDTVELKGEGFKRIAEEGQRVKVGDPVIEFDLPLLEEKAKSTLTPVVISNMDEIKELIKLSGSVTVGETPVIRIKK.

A PTS EIIA type-1 domain is found at 39–143 (DVVFAEKIVG…STLTPVVISN (105 aa)). Residues histidine 76 and histidine 91 each coordinate Zn(2+). The active-site Tele-phosphohistidine intermediate; for EIIA activity is the histidine 91. A Phosphohistidine; by HPr modification is found at histidine 91.

In terms of assembly, heterodimer with glycerol kinase (glpk). It depends on Zn(2+) as a cofactor.

It is found in the cytoplasm. The phosphoenolpyruvate-dependent sugar phosphotransferase system (sugar PTS), a major carbohydrate active transport system, catalyzes the phosphorylation of incoming sugar substrates concomitantly with their translocation across the cell membrane. The enzyme II complex composed of PtsG and Crr is involved in glucose transport. In Salmonella typhi, this protein is PTS system glucose-specific EIIA component (crr).